A 137-amino-acid chain; its full sequence is uncharacterized protein (137 aa).

Residues 4–21 traverse the membrane as a helical segment; the sequence is ISWQIVLAVIGVVAGFII.

Its subcellular location is the membrane. This is an uncharacterized protein from Archaeoglobus fulgidus (strain ATCC 49558 / DSM 4304 / JCM 9628 / NBRC 100126 / VC-16).